The following is a 329-amino-acid chain: DNA-directed RNA polymerase subunit alpha (329 aa).

The alpha N-terminal domain (alpha-NTD) stretch occupies residues 1–235 (MQGSVTEFLK…EQLDAFVDLR (235 aa)). The tract at residues 249 to 329 (FDPILLRPVD…NWPPASIAED (81 aa)) is alpha C-terminal domain (alpha-CTD).

It belongs to the RNA polymerase alpha chain family. In terms of assembly, homodimer. The RNAP catalytic core consists of 2 alpha, 1 beta, 1 beta' and 1 omega subunit. When a sigma factor is associated with the core the holoenzyme is formed, which can initiate transcription.

It catalyses the reaction RNA(n) + a ribonucleoside 5'-triphosphate = RNA(n+1) + diphosphate. DNA-dependent RNA polymerase catalyzes the transcription of DNA into RNA using the four ribonucleoside triphosphates as substrates. The protein is DNA-directed RNA polymerase subunit alpha of Photobacterium profundum (strain SS9).